Here is a 460-residue protein sequence, read N- to C-terminus: ATP synthase subunit beta (460 aa).

150–157 (GGAGVGKT) lines the ATP pocket.

This sequence belongs to the ATPase alpha/beta chains family. F-type ATPases have 2 components, CF(1) - the catalytic core - and CF(0) - the membrane proton channel. CF(1) has five subunits: alpha(3), beta(3), gamma(1), delta(1), epsilon(1). CF(0) has three main subunits: a(1), b(2) and c(9-12). The alpha and beta chains form an alternating ring which encloses part of the gamma chain. CF(1) is attached to CF(0) by a central stalk formed by the gamma and epsilon chains, while a peripheral stalk is formed by the delta and b chains.

It localises to the cell inner membrane. It carries out the reaction ATP + H2O + 4 H(+)(in) = ADP + phosphate + 5 H(+)(out). Functionally, produces ATP from ADP in the presence of a proton gradient across the membrane. The catalytic sites are hosted primarily by the beta subunits. The chain is ATP synthase subunit beta from Yersinia pestis bv. Antiqua (strain Angola).